A 398-amino-acid polypeptide reads, in one-letter code: Probable aminomethyltransferase (398 aa).

Belongs to the GcvT family. In terms of assembly, the glycine cleavage system is composed of four proteins: P, T, L and H.

It catalyses the reaction N(6)-[(R)-S(8)-aminomethyldihydrolipoyl]-L-lysyl-[protein] + (6S)-5,6,7,8-tetrahydrofolate = N(6)-[(R)-dihydrolipoyl]-L-lysyl-[protein] + (6R)-5,10-methylene-5,6,7,8-tetrahydrofolate + NH4(+). In terms of biological role, the glycine cleavage system catalyzes the degradation of glycine. This is Probable aminomethyltransferase from Thermococcus gammatolerans (strain DSM 15229 / JCM 11827 / EJ3).